The chain runs to 235 residues: Probable inactive serine protease 37 (235 aa).

A signal peptide spans 1-19 (MKYVFYLGVLAGTFFFADS). Residues 20–233 (SVQKEDPAPY…YVSWIENTAK (214 aa)) form the Peptidase S1 domain. Disulfide bonds link Cys-40-Cys-56, Cys-131-Cys-198, and Cys-163-Cys-177.

It belongs to the peptidase S1 family. As to expression, testis-specific. Expressed in spermatids (at protein level).

The protein resides in the cytoplasmic vesicle. Its subcellular location is the secretory vesicle. It localises to the acrosome. The protein localises to the secreted. Its function is as follows. Plays a role in male fertility. May have a role in sperm migration or binding to zona-intact eggs. Involved in the activation of the proacrosin/acrosin system. This is Probable inactive serine protease 37 from Homo sapiens (Human).